The following is a 672-amino-acid chain: Outer dynein arm-docking complex subunit 4 (672 aa).

TPR repeat units follow at residues 13 to 46 (FPSY…QDGD), 48 to 80 (NCLV…DPAF), 81 to 114 (CKGI…RPDR), 275 to 311 (LKSL…NKEE), 320 to 353 (GNLY…AKEY), 360 to 393 (SRAL…AKTT), 397 to 430 (TWLF…AEEE), and 437 to 470 (LNAS…AKLV). The span at 527 to 544 (RVRDEPEKVVKQWDHSED) shows a compositional bias: basic and acidic residues. The tract at residues 527–672 (RVRDEPEKVV…TGNEMEKEYE (146 aa)) is disordered. Residues 545–555 (EKETDEDDEAF) show a composition bias toward acidic residues. Composition is skewed to basic and acidic residues over residues 595–650 (ETGR…EELG) and 658–672 (GETK…KEYE).

As to quaternary structure, component of the outer dynein arm-docking complex along with ODAD1, ODAD2 and ODAD3. Interacts with ODAD1; this interaction may facilitate the recruitment and/or attachment of outer dynein arm docking complex proteins, including ODAD1, ODAD3 and ODAD2, to ciliary axonemes. Interacts with components of the IFT complex A, including IFT140, TTC21B/IFT139 and WDR19/IFT144, and the IFT complex B, including IFT46, IFT52 and IFT57. Interacts with CFAP53. Expressed in the nasal mucosa (at protein level).

Its subcellular location is the cytoplasm. It is found in the cytoskeleton. It localises to the cilium axoneme. Component of the outer dynein arm-docking complex (ODA-DC) that mediates outer dynein arms (ODA) binding onto the doublet microtubule. Plays an essential role for the assembly of ODA-DC and for the docking of ODA in ciliary axoneme. This chain is Outer dynein arm-docking complex subunit 4, found in Homo sapiens (Human).